The chain runs to 753 residues: Probable phosphoenolpyruvate synthase (753 aa).

Histidine 398 (tele-phosphohistidine intermediate) is an active-site residue. Substrate-binding residues include arginine 488, arginine 535, glutamate 631, glycine 653, threonine 654, asparagine 655, and aspartate 656. Glutamate 631 contacts Mg(2+). Mg(2+) is bound at residue aspartate 656. Catalysis depends on cysteine 703, which acts as the Proton donor.

This sequence belongs to the PEP-utilizing enzyme family. The cofactor is Mg(2+).

It catalyses the reaction pyruvate + ATP + H2O = phosphoenolpyruvate + AMP + phosphate + 2 H(+). It participates in carbohydrate biosynthesis; gluconeogenesis. Functionally, catalyzes the phosphorylation of pyruvate to phosphoenolpyruvate. This is Probable phosphoenolpyruvate synthase (ppsA) from Archaeoglobus fulgidus (strain ATCC 49558 / DSM 4304 / JCM 9628 / NBRC 100126 / VC-16).